The primary structure comprises 149 residues: Arginine repressor (149 aa).

It belongs to the ArgR family.

Its subcellular location is the cytoplasm. It participates in amino-acid biosynthesis; L-arginine biosynthesis [regulation]. Its function is as follows. Regulates arginine biosynthesis genes. The chain is Arginine repressor from Listeria monocytogenes serotype 4b (strain F2365).